A 436-amino-acid chain; its full sequence is MFESKINPLWQSFILAVQEEVKPALGCTEPISLALAAAAAAAELDGTVERIDAWVSPNLMKNGMGVTVPGTGMVGLPIAAALGALGGDAKAGLEVLKDASAKAVADAKAMLAAGHVAVMLQEPCNDILFSRAKVYSGDSWACVTIVGDHTNIVRIETDKGVVFTQADNAQEEEKTSPLGVLSHTSLEEILAFVNAVPFDAIRFILDAARLNGALSQEGLRGSWGLHIGSTLAKQCDRGLLAKDLSTAILIRTSAASDARMGGATLPAMSNSGSGNQGITATVPVMVVAEHVGADDERLARALMLSHLSAIYIHHQLPRLSALCAATTAAMGAAAGMAWLIDGRYDTIAMAISSMIGDVSGMICDGASNSCAMKVSTSASAAWKAVLMALDDTAVTGNEGIVAHNVEQSIANLCSLACRSMQQTDKQIIEIMASKAH.

The protein belongs to the UPF0597 family.

The chain is UPF0597 protein YhaM from Salmonella newport (strain SL254).